The sequence spans 352 residues: tRNA pseudouridine synthase D (352 aa).

Aspartate 78 acts as the Nucleophile in catalysis. The TRUD domain occupies 153–299 (GVPNYYGEQR…LDQDRRPLLL (147 aa)).

Belongs to the pseudouridine synthase TruD family.

It catalyses the reaction uridine(13) in tRNA = pseudouridine(13) in tRNA. In terms of biological role, responsible for synthesis of pseudouridine from uracil-13 in transfer RNAs. This is tRNA pseudouridine synthase D from Aeromonas hydrophila subsp. hydrophila (strain ATCC 7966 / DSM 30187 / BCRC 13018 / CCUG 14551 / JCM 1027 / KCTC 2358 / NCIMB 9240 / NCTC 8049).